Here is a 447-residue protein sequence, read N- to C-terminus: Alpha-1,3-mannosyl-glycoprotein 2-beta-N-acetylglucosaminyltransferase (447 aa).

At 1-6 (MLKKQT) the chain is on the cytoplasmic side. A helical; Signal-anchor for type II membrane protein transmembrane segment spans residues 7–29 (AGLVLWGAIIFVGWNALLLLFFW). At 30 to 447 (TRPAPGRLPS…TWTGYDPSWN (418 aa)) the chain is on the lumenal side. Residues Cys-115 and Cys-145 are joined by a disulfide bond. The substrate site is built by Arg-117, Asp-144, His-190, and Asp-212. Asp-213 is a binding site for Mn(2+). The cysteines at positions 239 and 305 are disulfide-linked. Asp-291 acts as the Proton acceptor in catalysis. Position 322 (Ser-322) interacts with substrate.

It belongs to the glycosyltransferase 13 family. Interacts with MGAT4D. Interacts with BRI3. Mn(2+) is required as a cofactor. In terms of tissue distribution, detected in kidney, liver and brain.

Its subcellular location is the golgi apparatus membrane. It localises to the cytoplasm. It is found in the perinuclear region. The enzyme catalyses N(4)-(alpha-D-Man-(1-&gt;3)-[alpha-D-Man-(1-&gt;3)-[alpha-D-Man-(1-&gt;6)]-alpha-D-Man-(1-&gt;6)]-beta-D-Man-(1-&gt;4)-beta-D-GlcNAc-(1-&gt;4)-beta-D-GlcNAc)-L-asparaginyl-[protein] (N-glucan mannose isomer 5A1,2) + UDP-N-acetyl-alpha-D-glucosamine = N(4)-{beta-D-GlcNAc-(1-&gt;2)-alpha-D-Man-(1-&gt;3)-[alpha-D-Man-(1-&gt;3)-[alpha-D-Man-(1-&gt;6)]-alpha-D-Man-(1-&gt;6)]-beta-D-Man-(1-&gt;4)-beta-D-GlcNAc-(1-&gt;4)-beta-D-GlcNAc}-L-asparaginyl-[protein] + UDP + H(+). It participates in protein modification; protein glycosylation. Its function is as follows. Initiates complex N-linked carbohydrate formation. Essential for the conversion of high-mannose to hybrid and complex N-glycans. In Mus musculus (Mouse), this protein is Alpha-1,3-mannosyl-glycoprotein 2-beta-N-acetylglucosaminyltransferase (Mgat1).